The chain runs to 27 residues: 23S rRNA methylase leader peptide (27 aa).

This peptide is involved in the control mechanism of the synthesis of the erythromycin resistance protein. In Enterococcus faecalis (Streptococcus faecalis), this protein is 23S rRNA methylase leader peptide (ermC).